Consider the following 122-residue polypeptide: UPF0102 protein MUL_2060 (122 aa).

Belongs to the UPF0102 family.

This is UPF0102 protein MUL_2060 from Mycobacterium ulcerans (strain Agy99).